We begin with the raw amino-acid sequence, 291 residues long: ATP synthase gamma chain (291 aa).

Belongs to the ATPase gamma chain family. As to quaternary structure, F-type ATPases have 2 components, CF(1) - the catalytic core - and CF(0) - the membrane proton channel. CF(1) has five subunits: alpha(3), beta(3), gamma(1), delta(1), epsilon(1). CF(0) has three main subunits: a, b and c.

The protein localises to the cell inner membrane. In terms of biological role, produces ATP from ADP in the presence of a proton gradient across the membrane. The gamma chain is believed to be important in regulating ATPase activity and the flow of protons through the CF(0) complex. The protein is ATP synthase gamma chain of Burkholderia mallei (strain NCTC 10247).